The chain runs to 95 residues: Small ribosomal subunit protein bS6 (95 aa).

This sequence belongs to the bacterial ribosomal protein bS6 family.

In terms of biological role, binds together with bS18 to 16S ribosomal RNA. This Corynebacterium urealyticum (strain ATCC 43042 / DSM 7109) protein is Small ribosomal subunit protein bS6.